We begin with the raw amino-acid sequence, 434 residues long: Adenylosuccinate synthetase (434 aa).

GTP is bound by residues Gly-15 to Lys-21 and Gly-43 to Thr-45. The Proton acceptor role is filled by Asp-16. The Mg(2+) site is built by Asp-16 and Gly-43. Residues Asp-16–Lys-19, Asn-41–His-44, Thr-133, Arg-147, Gln-228, Thr-243, and Arg-307 contribute to the IMP site. His-44 (proton donor) is an active-site residue. Ser-303–Arg-309 serves as a coordination point for substrate. GTP is bound by residues Arg-309, Lys-335–Asp-337, and Ser-418–Gly-420.

Belongs to the adenylosuccinate synthetase family. Homodimer. Requires Mg(2+) as cofactor.

It localises to the cytoplasm. The catalysed reaction is IMP + L-aspartate + GTP = N(6)-(1,2-dicarboxyethyl)-AMP + GDP + phosphate + 2 H(+). Its pathway is purine metabolism; AMP biosynthesis via de novo pathway; AMP from IMP: step 1/2. Plays an important role in the de novo pathway of purine nucleotide biosynthesis. Catalyzes the first committed step in the biosynthesis of AMP from IMP. This Neisseria meningitidis serogroup C / serotype 2a (strain ATCC 700532 / DSM 15464 / FAM18) protein is Adenylosuccinate synthetase.